A 359-amino-acid chain; its full sequence is Membrane-bound lytic murein transglycosylase C (359 aa).

An N-terminal signal peptide occupies residues 1 to 16 (MKKYLALALIAPLLIS). Cysteine 17 is lipidated: N-palmitoyl cysteine. The S-diacylglycerol cysteine moiety is linked to residue cysteine 17.

It belongs to the transglycosylase Slt family.

It localises to the cell outer membrane. It carries out the reaction Exolytic cleavage of the (1-&gt;4)-beta-glycosidic linkage between N-acetylmuramic acid (MurNAc) and N-acetylglucosamine (GlcNAc) residues in peptidoglycan, from either the reducing or the non-reducing ends of the peptidoglycan chains, with concomitant formation of a 1,6-anhydrobond in the MurNAc residue.. In terms of biological role, murein-degrading enzyme. May play a role in recycling of muropeptides during cell elongation and/or cell division. The sequence is that of Membrane-bound lytic murein transglycosylase C from Escherichia coli O127:H6 (strain E2348/69 / EPEC).